The following is a 316-amino-acid chain: Coiled-coil domain-containing protein 130 homolog (316 aa).

Positions 182 to 203 form a coiled coil; it reads ANSRLRAEFRQQKKEINGQQEL. Residues 287 to 316 form a disordered region; that stretch reads KLEETTSSATNEKPISLVGDYSSSDNDSNG.

Belongs to the CWC16 family.

This is Coiled-coil domain-containing protein 130 homolog from Drosophila melanogaster (Fruit fly).